The primary structure comprises 239 residues: Ribosomal RNA small subunit methyltransferase G (239 aa).

S-adenosyl-L-methionine-binding positions include G77, F82, 128–129 (AE), and R146. The segment at 216–239 (KRRQTSKKYPRKPGTPNKSPLVES) is disordered.

It belongs to the methyltransferase superfamily. RNA methyltransferase RsmG family.

The protein localises to the cytoplasm. In terms of biological role, specifically methylates the N7 position of guanine in position 535 of 16S rRNA. The chain is Ribosomal RNA small subunit methyltransferase G from Staphylococcus epidermidis (strain ATCC 35984 / DSM 28319 / BCRC 17069 / CCUG 31568 / BM 3577 / RP62A).